The primary structure comprises 91 residues: Small ribosomal subunit protein bS20 (91 aa).

It belongs to the bacterial ribosomal protein bS20 family.

In terms of biological role, binds directly to 16S ribosomal RNA. The chain is Small ribosomal subunit protein bS20 from Caulobacter vibrioides (strain ATCC 19089 / CIP 103742 / CB 15) (Caulobacter crescentus).